Reading from the N-terminus, the 242-residue chain is Dihydropteridine reductase (242 aa).

Residue 12 to 36 (LVYGGRGALGSRCVQAFRARNWWVA) coordinates NADP(+). Lys71, Lys77, Lys94, and Lys100 each carry N6-succinyllysine. Tyr148 (proton acceptor) is an active-site residue.

It belongs to the short-chain dehydrogenases/reductases (SDR) family. As to quaternary structure, homodimer.

The enzyme catalyses 5,6,7,8-tetrahydropteridine + NAD(+) = 6,7-dihydropteridine + NADH + H(+). It carries out the reaction 5,6,7,8-tetrahydropteridine + NADP(+) = 6,7-dihydropteridine + NADPH + H(+). In terms of biological role, catalyzes the conversion of quinonoid dihydrobiopterin into tetrahydrobiopterin. The sequence is that of Dihydropteridine reductase (QDPR) from Bos taurus (Bovine).